The primary structure comprises 476 residues: Abscisic acid 8'-hydroxylase CYP707A1 (476 aa).

The chain crosses the membrane as a helical span at residues 5-25 (FEIFLYISMFVLGYLSYYFCF). C422 contacts heme.

It belongs to the cytochrome P450 family. Requires heme as cofactor. Expressed in ovaries (specifically in ovules and placenta), sepals, petals and pedicels.

The protein resides in the membrane. The enzyme catalyses 2-cis-(+)-abscisate + reduced [NADPH--hemoprotein reductase] + O2 = (+)-8'-hydroxyabscisate + oxidized [NADPH--hemoprotein reductase] + H2O + H(+). Its pathway is plant hormone degradation; abscisic acid degradation. Functionally, involved in the oxidative degradation of abscisic acid, especially in pollinated ovaries. The sequence is that of Abscisic acid 8'-hydroxylase CYP707A1 from Solanum lycopersicum (Tomato).